The sequence spans 122 residues: Small ribosomal subunit protein uS13 (122 aa).

Residues 99–122 (RGQRTHTNARTRKGPAKAIAGKKK) form a disordered region.

Belongs to the universal ribosomal protein uS13 family. In terms of assembly, part of the 30S ribosomal subunit. Forms a loose heterodimer with protein S19. Forms two bridges to the 50S subunit in the 70S ribosome.

In terms of biological role, located at the top of the head of the 30S subunit, it contacts several helices of the 16S rRNA. In the 70S ribosome it contacts the 23S rRNA (bridge B1a) and protein L5 of the 50S subunit (bridge B1b), connecting the 2 subunits; these bridges are implicated in subunit movement. Contacts the tRNAs in the A and P-sites. The chain is Small ribosomal subunit protein uS13 from Sinorhizobium medicae (strain WSM419) (Ensifer medicae).